A 165-amino-acid chain; its full sequence is Serine/threonine-protein phosphatase 2A 56 kDa regulatory subunit epsilon isoform (165 aa).

The interval 1–41 (MSSAPTTPPSVDKVDGFSRKSVRKARQKRSQSSSQFRSQGK) is disordered. An N-acetylserine modification is found at serine 2. Threonine 7 carries the phosphothreonine modification. A compositionally biased stretch (basic residues) spans 20 to 29 (KSVRKARQKR). A phosphoserine mark is found at serine 30, serine 32, and serine 34. The segment covering 30–41 (SQSSSQFRSQGK) has biased composition (low complexity).

It belongs to the phosphatase 2A regulatory subunit B56 family. As to quaternary structure, PP2A consists of a common heterodimeric core enzyme, composed of a 36 kDa catalytic subunit (subunit C) and a 65 kDa constant regulatory subunit (PR65 or subunit A), that associates with a variety of regulatory subunits. Proteins that associate with the core dimer include three families of regulatory subunits B (the R2/B/PR55/B55, R3/B''/PR72/PR130/PR59 and R5/B'/B56 families), the 48 kDa variable regulatory subunit, viral proteins, and cell signaling molecules. Interacts with SGO1. Found in a complex with at least ARL2, PPP2CB; PPP2R1A, PPP2R2A, PPP2R5E and TBCD. As to expression, highly expressed in testis, lung and brain.

The protein resides in the cytoplasm. In terms of biological role, the B regulatory subunit might modulate substrate selectivity and catalytic activity, and might also direct the localization of the catalytic enzyme to a particular subcellular compartment. In Oryctolagus cuniculus (Rabbit), this protein is Serine/threonine-protein phosphatase 2A 56 kDa regulatory subunit epsilon isoform (PPP2R5E).